A 305-amino-acid chain; its full sequence is UDP-N-acetylenolpyruvoylglucosamine reductase 2 (305 aa).

The FAD-binding PCMH-type domain maps to 33 to 197 (VGGKADVFVA…LEARFELEEG (165 aa)). Residue arginine 176 is part of the active site. The active-site Proton donor is serine 226. Residue glutamate 296 is part of the active site.

It belongs to the MurB family. FAD is required as a cofactor.

Its subcellular location is the cytoplasm. It carries out the reaction UDP-N-acetyl-alpha-D-muramate + NADP(+) = UDP-N-acetyl-3-O-(1-carboxyvinyl)-alpha-D-glucosamine + NADPH + H(+). It participates in cell wall biogenesis; peptidoglycan biosynthesis. Its function is as follows. Cell wall formation. The protein is UDP-N-acetylenolpyruvoylglucosamine reductase 2 of Bacillus cereus (strain ATCC 10987 / NRS 248).